The following is a 445-amino-acid chain: Tubulin beta-1 chain (445 aa).

The short motif at 1–4 is the MREI motif element; it reads MREI. Residues Q11, E69, S138, G142, T143, G144, N204, and N226 each contribute to the GTP site. Position 69 (E69) interacts with Mg(2+). The segment at 424-445 is disordered; that stretch reads QYQDATADEQGEFEEEGEEDEA. Residues 429–445 show a composition bias toward acidic residues; the sequence is TADEQGEFEEEGEEDEA. Position 438 is a 5-glutamyl polyglutamate (E438).

Belongs to the tubulin family. Dimer of alpha and beta chains. A typical microtubule is a hollow water-filled tube with an outer diameter of 25 nm and an inner diameter of 15 nM. Alpha-beta heterodimers associate head-to-tail to form protofilaments running lengthwise along the microtubule wall with the beta-tubulin subunit facing the microtubule plus end conferring a structural polarity. Microtubules usually have 13 protofilaments but different protofilament numbers can be found in some organisms and specialized cells. Mg(2+) is required as a cofactor. In terms of processing, some glutamate residues at the C-terminus are polyglycylated, resulting in polyglycine chains on the gamma-carboxyl group. Glycylation is mainly limited to tubulin incorporated into axonemes (cilia and flagella) whereas glutamylation is prevalent in neuronal cells, centrioles, axonemes, and the mitotic spindle. Both modifications can coexist on the same protein on adjacent residues, and lowering polyglycylation levels increases polyglutamylation, and reciprocally. The precise function of polyglycylation is still unclear. Post-translationally, some glutamate residues at the C-terminus are polyglutamylated, resulting in polyglutamate chains on the gamma-carboxyl group. Polyglutamylation plays a key role in microtubule severing by spastin (SPAST). SPAST preferentially recognizes and acts on microtubules decorated with short polyglutamate tails: severing activity by SPAST increases as the number of glutamates per tubulin rises from one to eight, but decreases beyond this glutamylation threshold. Highly expressed in skeletal muscle.

The protein resides in the cytoplasm. It is found in the cytoskeleton. Tubulin is the major constituent of microtubules, a cylinder consisting of laterally associated linear protofilaments composed of alpha- and beta-tubulin heterodimers. Microtubules grow by the addition of GTP-tubulin dimers to the microtubule end, where a stabilizing cap forms. Below the cap, tubulin dimers are in GDP-bound state, owing to GTPase activity of alpha-tubulin. This is Tubulin beta-1 chain from Gallus gallus (Chicken).